We begin with the raw amino-acid sequence, 705 residues long: Effector protein hopD1 (705 aa).

Polar residues-rich tracts occupy residues 1–11 (MNPLRSIQHNI) and 28–41 (QAQQ…SPSQ). Disordered regions lie at residues 1 to 41 (MNPL…SPSQ) and 173 to 207 (SSSL…DSGS). Residues 173 to 184 (SSSLETPLLSSP) are compositionally biased toward low complexity.

The protein resides in the secreted. Its function is as follows. Effector protein involved in non-host recognition. The polypeptide is Effector protein hopD1 (hopD1) (Pseudomonas syringae pv. tomato (strain ATCC BAA-871 / DC3000)).